The following is a 188-amino-acid chain: Photosystem I assembly protein Ycf4 (188 aa).

The next 2 helical transmembrane spans lie at 28 to 48 (WATVITIGGTGFFLAGLSSYL) and 68 to 88 (IAIGFYGVAALLLAIYLWATI).

It belongs to the Ycf4 family.

Its subcellular location is the cellular thylakoid membrane. Seems to be required for the assembly of the photosystem I complex. This Cyanothece sp. (strain PCC 7425 / ATCC 29141) protein is Photosystem I assembly protein Ycf4.